A 56-amino-acid chain; its full sequence is UPF0434 protein Ecaj_0131 (56 aa).

The protein belongs to the UPF0434 family.

The sequence is that of UPF0434 protein Ecaj_0131 from Ehrlichia canis (strain Jake).